We begin with the raw amino-acid sequence, 568 residues long: Proline--tRNA ligase (568 aa).

It belongs to the class-II aminoacyl-tRNA synthetase family. ProS type 1 subfamily. Homodimer.

It localises to the cytoplasm. The catalysed reaction is tRNA(Pro) + L-proline + ATP = L-prolyl-tRNA(Pro) + AMP + diphosphate. Its function is as follows. Catalyzes the attachment of proline to tRNA(Pro) in a two-step reaction: proline is first activated by ATP to form Pro-AMP and then transferred to the acceptor end of tRNA(Pro). As ProRS can inadvertently accommodate and process non-cognate amino acids such as alanine and cysteine, to avoid such errors it has two additional distinct editing activities against alanine. One activity is designated as 'pretransfer' editing and involves the tRNA(Pro)-independent hydrolysis of activated Ala-AMP. The other activity is designated 'posttransfer' editing and involves deacylation of mischarged Ala-tRNA(Pro). The misacylated Cys-tRNA(Pro) is not edited by ProRS. This is Proline--tRNA ligase from Chlamydia pneumoniae (Chlamydophila pneumoniae).